An 863-amino-acid polypeptide reads, in one-letter code: Leucine--tRNA ligase (863 aa).

Residues 40-51 (PYPSGAGLHVGH) carry the 'HIGH' region motif. Positions 635-639 (KMSKS) match the 'KMSKS' region motif. Lys638 is an ATP binding site.

This sequence belongs to the class-I aminoacyl-tRNA synthetase family.

It is found in the cytoplasm. The enzyme catalyses tRNA(Leu) + L-leucine + ATP = L-leucyl-tRNA(Leu) + AMP + diphosphate. The protein is Leucine--tRNA ligase of Leptospira interrogans serogroup Icterohaemorrhagiae serovar Lai (strain 56601).